Consider the following 538-residue polypeptide: RNA-binding protein RO60 (538 aa).

N-acetylmethionine is present on M1. Phosphoserine occurs at positions 4 and 19. The region spanning 16–369 (IANSQDGYVW…TFKTVEPTGK (354 aa)) is the TROVE domain. The RNA-binding stretch occupies residues 120–284 (RIPTHLFTFI…EMPLTALLRN (165 aa)). K224 and K359 each carry N6-acetyllysine. The tract at residues 361-538 (FKTVEPTGKR…VIRNFTLDMI (178 aa)) is VWFA-like domain. A divalent metal cation-binding residues include S378, S380, and T445.

This sequence belongs to the Ro 60 kDa family. As to quaternary structure, identified in a IGF2BP1-dependent mRNP granule complex containing untranslated mRNAs. Found in a complex with PUF60 and Y5 RNA. Interacts with RAB11FIP5.

The protein resides in the cytoplasm. RNA-binding protein that binds to misfolded non-coding RNAs, pre-5S rRNA, and several small cytoplasmic RNA molecules known as Y RNAs. Binds to endogenous Alu retroelements which are induced by type I interferon and stimulate porinflammatory cytokine secretion. Regulates the expression of Alu retroelements as well as inflammatory genes. May play roles in cilia formation and/or maintenance. This is RNA-binding protein RO60 from Homo sapiens (Human).